The primary structure comprises 89 residues: Small ribosomal subunit protein uS15 (89 aa).

The protein belongs to the universal ribosomal protein uS15 family. Part of the 30S ribosomal subunit. Forms a bridge to the 50S subunit in the 70S ribosome, contacting the 23S rRNA.

One of the primary rRNA binding proteins, it binds directly to 16S rRNA where it helps nucleate assembly of the platform of the 30S subunit by binding and bridging several RNA helices of the 16S rRNA. Its function is as follows. Forms an intersubunit bridge (bridge B4) with the 23S rRNA of the 50S subunit in the ribosome. The chain is Small ribosomal subunit protein uS15 from Actinobacillus pleuropneumoniae serotype 5b (strain L20).